A 481-amino-acid polypeptide reads, in one-letter code: Uridine 5'-monophosphate synthase (481 aa).

Residues 1-214 (MEVASQALGP…VFSAANHNGL (214 aa)) are OPRTase. Tyr37 is subject to Phosphotyrosine. The domain linker stretch occupies residues 215–220 (PPPEKK). The segment at 221–481 (ACKELSFGAR…EAYLSRLAVQ (261 aa)) is OMPdecase. Ser257 provides a ligand contact to orotidine 5'-phosphate. Residues Ser257, Asp259, and 281 to 283 (KTH) contribute to the UMP site. Orotidine 5'-phosphate is bound by residues Lys281, Lys314, Asp317, Thr321, Ser372, 430 to 432 (QQY), and 450 to 451 (GR). Active-site for OMPdecase activity residues include Lys314 and Asp317. UMP-binding positions include Asp317, Thr321, Ser372, 430–432 (QQY), and 450–451 (GR).

In the N-terminal section; belongs to the purine/pyrimidine phosphoribosyltransferase family. The protein in the C-terminal section; belongs to the OMP decarboxylase family. In terms of assembly, homodimer; dimerization is required for enzymatic activity.

It catalyses the reaction orotidine 5'-phosphate + diphosphate = orotate + 5-phospho-alpha-D-ribose 1-diphosphate. The enzyme catalyses orotidine 5'-phosphate + H(+) = UMP + CO2. It functions in the pathway pyrimidine metabolism; UMP biosynthesis via de novo pathway; UMP from orotate: step 1/2. Its pathway is pyrimidine metabolism; UMP biosynthesis via de novo pathway; UMP from orotate: step 2/2. Bifunctional enzyme catalyzing the last two steps of de novo pyrimidine biosynthesis, orotate phosphoribosyltransferase (OPRT), which converts orotate to orotidine-5'-monophosphate (OMP), and orotidine-5'-monophosphate decarboxylase (ODC), the terminal enzymatic reaction that decarboxylates OMP to uridine monophosphate (UMP). The protein is Uridine 5'-monophosphate synthase (Umps) of Mus musculus (Mouse).